Here is an 82-residue protein sequence, read N- to C-terminus: Small ribosomal subunit protein bS16 (82 aa).

It belongs to the bacterial ribosomal protein bS16 family.

The chain is Small ribosomal subunit protein bS16 from Psychromonas ingrahamii (strain DSM 17664 / CCUG 51855 / 37).